A 501-amino-acid polypeptide reads, in one-letter code: Aluminum-activated malate transporter 2 (501 aa).

6 consecutive transmembrane segments (helical) span residues 22–42, 52–72, 78–98, 101–121, 130–150, and 166–186; these read VVHAFKVGLALALVSSFYYYQ, AMWAVMTVVVVFEFSVGATLG, AVATLVAGGLGIGAHHLASLS, TVEPILLAIFVFVLAALSTFV, RYDYGVLIFILTFALISVSGF, and VIMGGVSCVLISIFVCPVWAG. Residues 398 to 425 form a disordered region; that stretch reads FKNKKKPSKSNSGSIGQAMPNKSHDDDD.

Belongs to the aromatic acid exporter (TC 2.A.85) family.

The protein resides in the membrane. Its function is as follows. Malate transporter. The polypeptide is Aluminum-activated malate transporter 2 (ALMT2) (Arabidopsis thaliana (Mouse-ear cress)).